A 252-amino-acid chain; its full sequence is 5-oxoprolinase subunit A (252 aa).

The protein belongs to the LamB/PxpA family. As to quaternary structure, forms a complex composed of PxpA, PxpB and PxpC.

It catalyses the reaction 5-oxo-L-proline + ATP + 2 H2O = L-glutamate + ADP + phosphate + H(+). Functionally, catalyzes the cleavage of 5-oxoproline to form L-glutamate coupled to the hydrolysis of ATP to ADP and inorganic phosphate. The polypeptide is 5-oxoprolinase subunit A (Mycolicibacterium paratuberculosis (strain ATCC BAA-968 / K-10) (Mycobacterium paratuberculosis)).